The chain runs to 199 residues: Pyridoxine/pyridoxamine 5'-phosphate oxidase (199 aa).

Residues 44–49 (RTVLLK), 59–60 (YT), K66, and Q91 each bind FMN. Position 49 (K49) interacts with substrate. Y109, R113, and S117 together coordinate substrate. FMN is bound by residues 126-127 (QS) and W171. Residue 177–179 (RLH) participates in substrate binding. R181 provides a ligand contact to FMN.

The protein belongs to the pyridoxamine 5'-phosphate oxidase family. Homodimer. FMN is required as a cofactor.

It catalyses the reaction pyridoxamine 5'-phosphate + O2 + H2O = pyridoxal 5'-phosphate + H2O2 + NH4(+). The catalysed reaction is pyridoxine 5'-phosphate + O2 = pyridoxal 5'-phosphate + H2O2. The protein operates within cofactor metabolism; pyridoxal 5'-phosphate salvage; pyridoxal 5'-phosphate from pyridoxamine 5'-phosphate: step 1/1. It participates in cofactor metabolism; pyridoxal 5'-phosphate salvage; pyridoxal 5'-phosphate from pyridoxine 5'-phosphate: step 1/1. Its function is as follows. Catalyzes the oxidation of either pyridoxine 5'-phosphate (PNP) or pyridoxamine 5'-phosphate (PMP) into pyridoxal 5'-phosphate (PLP). The polypeptide is Pyridoxine/pyridoxamine 5'-phosphate oxidase (Xanthomonas campestris pv. campestris (strain 8004)).